Here is a 327-residue protein sequence, read N- to C-terminus: Ribonucleoside-diphosphate reductase small chain (327 aa).

Positions 70, 101, and 104 each coordinate Fe cation. Tyrosine 108 is a catalytic residue. 3 residues coordinate Fe cation: glutamate 164, glutamate 198, and histidine 201.

The protein belongs to the ribonucleoside diphosphate reductase small chain family. In terms of assembly, heterotetramer composed of a homodimer of the large subunit (R1) and a homodimer of the small subunit (R2). Larger multisubunit protein complex are also active, composed of (R1)n(R2)n. Fe cation is required as a cofactor.

The enzyme catalyses a 2'-deoxyribonucleoside 5'-diphosphate + [thioredoxin]-disulfide + H2O = a ribonucleoside 5'-diphosphate + [thioredoxin]-dithiol. Ribonucleoside-diphosphate reductase holoenzyme provides the precursors necessary for viral DNA synthesis. Allows virus growth in non-dividing cells. Catalyzes the biosynthesis of deoxyribonucleotides from the corresponding ribonucleotides. The polypeptide is Ribonucleoside-diphosphate reductase small chain (African swine fever virus (isolate Tick/Malawi/Lil 20-1/1983) (ASFV)).